The chain runs to 734 residues: Photosystem I P700 chlorophyll a apoprotein A2 (734 aa).

Transmembrane regions (helical) follow at residues 46–69 (IFASHFGQLAVIFLWTSGNLFHVA), 135–158 (LYRGALFLLFLSTLALLAGWLHLQ), 175–199 (LNHHLSGLFGVSSLAWSGHLVHVAI), 273–291 (IAHHHLAIAILFIVAGHMY), 330–353 (LHFQLGLALASLGVITSLVAQHMY), 369–395 (AALYTHHQYIAGFIMVGAFAHGAIFFI), 417–439 (AIISHLSWASLFLGFHTLGLYVH), and 517–535 (FLVHHAIALGLHTTTLILV). The [4Fe-4S] cluster site is built by cysteine 559 and cysteine 568. A run of 2 helical transmembrane segments spans residues 575 to 596 (AFYLAVFWMLNTIGWVTFYWHW) and 643 to 665 (LSVWAWMFLFGHLIWATGFMFLI). 3 residues coordinate chlorophyll a: histidine 654, methionine 662, and tyrosine 670. Tryptophan 671 provides a ligand contact to phylloquinone. A helical membrane pass occupies residues 707 to 727 (LVGLSHFSVGYIFTYAAFLIA).

Belongs to the PsaA/PsaB family. The PsaA/B heterodimer binds the P700 chlorophyll special pair and subsequent electron acceptors. PSI consists of a core antenna complex that captures photons, and an electron transfer chain that converts photonic excitation into a charge separation. The eukaryotic PSI reaction center is composed of at least 11 subunits. Requires P700 is a chlorophyll a/chlorophyll a' dimer, A0 is one or more chlorophyll a, A1 is one or both phylloquinones and FX is a shared 4Fe-4S iron-sulfur center. as cofactor.

Its subcellular location is the plastid. The protein resides in the chloroplast thylakoid membrane. It catalyses the reaction reduced [plastocyanin] + hnu + oxidized [2Fe-2S]-[ferredoxin] = oxidized [plastocyanin] + reduced [2Fe-2S]-[ferredoxin]. PsaA and PsaB bind P700, the primary electron donor of photosystem I (PSI), as well as the electron acceptors A0, A1 and FX. PSI is a plastocyanin-ferredoxin oxidoreductase, converting photonic excitation into a charge separation, which transfers an electron from the donor P700 chlorophyll pair to the spectroscopically characterized acceptors A0, A1, FX, FA and FB in turn. Oxidized P700 is reduced on the lumenal side of the thylakoid membrane by plastocyanin. The chain is Photosystem I P700 chlorophyll a apoprotein A2 from Chara vulgaris (Common stonewort).